The following is a 303-amino-acid chain: Rhomboid-related protein 2 (303 aa).

A disordered region spans residues 20–39 (MKEELEEEEKMREDGGGKDR). The span at 28–39 (EKMREDGGGKDR) shows a compositional bias: basic and acidic residues. 7 helical membrane passes run 72-92 (PVFI…YAVW), 128-148 (LVHA…VLGI), 159-179 (VGLV…IFDP), 183-203 (LVGA…NVLV), 212-232 (FGIF…GFAL), 245-265 (VSFA…YTVF), and 278-298 (FWIA…FNIF). Catalysis depends on Ser187, which acts as the Nucleophile. His250 is a catalytic residue.

Belongs to the peptidase S54 family. In terms of processing, proteolytic processing of the proenzyme produces a N-terminal fragment (NTF) and a C-terminal fragment (CTF). The processing is required for activation of the protease.

The protein localises to the cell membrane. The enzyme catalyses Cleaves type-1 transmembrane domains using a catalytic dyad composed of serine and histidine that are contributed by different transmembrane domains.. In terms of biological role, involved in regulated intramembrane proteolysis and the subsequent release of functional polypeptides from their membrane anchors. Known substrate: EFNB3. This chain is Rhomboid-related protein 2 (RHBDL2), found in Homo sapiens (Human).